The sequence spans 2614 residues: Talin-B (2614 aa).

In terms of domain architecture, FERM spans 85–369; that stretch reads RPLKVRLMDE…GYIEILMKKR (285 aa). The tract at residues 393-421 is disordered; it reads RGQTSQATTSSSLSGYDGNGGREGQYSAP. Over residues 395–406 the composition is skewed to low complexity; it reads QTSQATTSSSLS. 2 coiled-coil regions span residues 1938-1965 and 2033-2057; these read TQNI…ASGK and NKAI…LVQS. Residues 2219 to 2460 form the I/LWEQ domain; that stretch reads LLFAAGESLE…SIRKKEYSDQ (242 aa). The interval 2454 to 2557 is disordered; it reads KKEYSDQTGN…AAPTAAAPNK (104 aa). Polar residues predominate over residues 2473–2487; it reads KPTTSISVGITPTKR. Residues 2517-2537 are compositionally biased toward low complexity; it reads KKPAPSQAPSSPVAPVSAPVS. The segment covering 2538–2548 has biased composition (pro residues); the sequence is KPSPKPAPKPA. The HP domain occupies 2553 to 2614; the sequence is AAPNKTYTLE…NNIKTKLGLF (62 aa).

The protein resides in the cytoplasm. Its subcellular location is the cytoskeleton. It is found in the cell cortex. In terms of biological role, actin-binding protein required for multicellular morphogenesis. Substrate of pkgB and/or pkbA. The sequence is that of Talin-B (talB) from Dictyostelium discoideum (Social amoeba).